The primary structure comprises 215 residues: NAD(P)H-quinone oxidoreductase subunit I (215 aa).

4Fe-4S ferredoxin-type domains follow at residues 55 to 84 and 95 to 124; these read GRIH…VDWV and RNYS…MTEE. Residues cysteine 64, cysteine 67, cysteine 70, cysteine 74, cysteine 104, cysteine 107, cysteine 110, and cysteine 114 each contribute to the [4Fe-4S] cluster site. Residues 169 to 180 are compositionally biased toward basic and acidic residues; sequence MDPHGVASDRPR. Residues 169–215 form a disordered region; the sequence is MDPHGVASDRPRAGQLPAQVLETLTPPAKPTAKNDGQSSSEAKEGDA.

It belongs to the complex I 23 kDa subunit family. As to quaternary structure, NDH-1 is composed of at least 11 different subunits. Requires [4Fe-4S] cluster as cofactor.

It localises to the cellular thylakoid membrane. The enzyme catalyses a plastoquinone + NADH + (n+1) H(+)(in) = a plastoquinol + NAD(+) + n H(+)(out). The catalysed reaction is a plastoquinone + NADPH + (n+1) H(+)(in) = a plastoquinol + NADP(+) + n H(+)(out). NDH-1 shuttles electrons from an unknown electron donor, via FMN and iron-sulfur (Fe-S) centers, to quinones in the respiratory and/or the photosynthetic chain. The immediate electron acceptor for the enzyme in this species is believed to be plastoquinone. Couples the redox reaction to proton translocation, and thus conserves the redox energy in a proton gradient. This chain is NAD(P)H-quinone oxidoreductase subunit I, found in Synechococcus sp. (strain CC9605).